The following is a 503-amino-acid chain: REST corepressor 2 (503 aa).

Residues 1–62 (MPSVMEKSHG…IPECKPDNTS (62 aa)) are disordered. An ELM2 domain is found at 41–126 (SMIRVGSDYQ…RSLADLANFT (86 aa)). The region spanning 127-178 (PFPEEWSVEDKVLFEQAFSFHGKSFQRIQQMLPEKLIPSLVKYYYSWKKTRS) is the SANT 1 domain. Coiled-coil stretches lie at residues 182–206 (VMDR…DQIK) and 286–314 (QLET…SLEG). One can recognise an SANT 2 domain in the interval 327–378 (KLNARWTTDEQLLAVQAVRKYGKDFQAISEVLGNKTPSQVKTFFISYRRRFN). A disordered region spans residues 385 to 503 (EWEAEQEPSP…VGSHAESTFS (119 aa)). Over residues 399–412 (TDMSNKTSGSSQTP) the composition is skewed to polar residues. Over residues 423–442 (SVSSSSQPAPPAAAAAASLS) the composition is skewed to low complexity.

It belongs to the CoREST family.

Its subcellular location is the nucleus. May act as a component of a corepressor complex that represses transcription. This Xenopus laevis (African clawed frog) protein is REST corepressor 2 (rcor2).